Consider the following 527-residue polypeptide: Phosphoenolpyruvate carboxykinase (ATP) (527 aa).

Residues Arg-56, Tyr-192, and Lys-198 each contribute to the substrate site. ATP is bound by residues Lys-198, His-217, and 233–241 (GLSGTGKTT). Positions 198 and 217 each coordinate Mn(2+). Asp-254 provides a ligand contact to Mn(2+). ATP is bound by residues Glu-282, Arg-319, and Thr-444. Arg-319 serves as a coordination point for substrate.

Belongs to the phosphoenolpyruvate carboxykinase (ATP) family. Mn(2+) is required as a cofactor.

Its subcellular location is the cytoplasm. It catalyses the reaction oxaloacetate + ATP = phosphoenolpyruvate + ADP + CO2. It functions in the pathway carbohydrate biosynthesis; gluconeogenesis. Its function is as follows. Involved in the gluconeogenesis. Catalyzes the conversion of oxaloacetate (OAA) to phosphoenolpyruvate (PEP) through direct phosphoryl transfer between the nucleoside triphosphate and OAA. This chain is Phosphoenolpyruvate carboxykinase (ATP), found in Bacillus subtilis (strain 168).